The primary structure comprises 4652 residues: Low-density lipoprotein receptor-related protein 2 (4652 aa).

A signal peptide spans 1-25 (MERWAAAAACTLLLAFAACLAPASG). Residues 26–4422 (RECLGNEFRC…SKGISPGTTV (4397 aa)) are Extracellular-facing. LDL-receptor class A domains lie at 27 to 63 (ECLG…IGCP), 66 to 104 (TCGS…QRCP), 108 to 144 (TCSS…INCR), 142 to 181 (NCRY…LNCT), 183 to 219 (RCLR…HSCS), 223 to 259 (PCKG…DGCE), and 267 to 308 (ECYP…RVCD). Disulfide bonds link Cys28-Cys40, Cys35-Cys53, Cys47-Cys62, Cys67-Cys80, Cys74-Cys93, Cys87-Cys103, Cys109-Cys121, Cys116-Cys134, Cys128-Cys143, Cys143-Cys158, Cys153-Cys171, Cys165-Cys180, Cys184-Cys196, Cys191-Cys209, Cys203-Cys218, Cys224-Cys236, Cys231-Cys249, Cys243-Cys258, Cys268-Cys281, Cys275-Cys294, and Cys288-Cys307. N-linked (GlcNAc...) asparagine glycosylation is found at Asn160 and Asn179. Residue Asn341 is glycosylated (N-linked (GlcNAc...) asparagine). The region spanning 348 to 386 (DFNDCQIWGICDHFCEDRIGHHQCFCAEGYVLEHEQHCR) is the EGF-like 1; calcium-binding domain. Disulfide bonds link Cys352/Cys362, Cys358/Cys371, and Cys373/Cys385. Asn388 carries an N-linked (GlcNAc...) asparagine glycan. LDL-receptor class B repeat units follow at residues 436–478 (SKVF…DWIN), 479–521 (NKLY…DPTV), 522–568 (GYLF…DLVA), 569–613 (KRVY…FEDN), 753–795 (NAIF…DWIS), 796–837 (RNLY…HPIA), 838–881 (GYIF…DWGS), and 882–925 (SRLY…FGEY). Asn771 carries an N-linked (GlcNAc...) asparagine glycan. N-linked (GlcNAc...) asparagine glycosylation occurs at Asn866. The N-linked (GlcNAc...) asparagine glycan is linked to Asn1015. Residues 1025-1061 (QCGALSFPCNNGRCVPLHYRCDGVDDCHDNSDEVQCG) enclose the LDL-receptor class A 8 domain. Disulfide bonds link Cys1026–Cys1038, Cys1033–Cys1051, and Cys1045–Cys1060. Residue Asn1064 is glycosylated (N-linked (GlcNAc...) asparagine). LDL-receptor class A domains are found at residues 1066–1104 (SCAP…QNCS), 1110–1146 (SCRA…KRCD), 1150–1186 (TCSP…SACV), 1188–1225 (NCTD…IDCP), 1231–1269 (MCRQ…SGCP), 1272–1308 (TCPX…KDCP), and 1313–1351 (LCPS…PLCN). Intrachain disulfides connect Cys1067–Cys1081, Cys1074–Cys1094, Cys1088–Cys1103, Cys1111–Cys1123, Cys1118–Cys1136, Cys1130–Cys1145, Cys1151–Cys1163, Cys1158–Cys1176, and Cys1170–Cys1185. Asn1102 is a glycosylation site (N-linked (GlcNAc...) asparagine). Ca(2+) is bound by residues Trp1128, Asp1131, Asp1133, Asp1135, Asp1141, and Glu1142. N-linked (GlcNAc...) asparagine glycosylation is present at Asn1188. 12 cysteine pairs are disulfide-bonded: Cys1189/Cys1202, Cys1196/Cys1215, Cys1209/Cys1224, Cys1232/Cys1245, Cys1239/Cys1258, Cys1252/Cys1268, Cys1273/Cys1285, Cys1280/Cys1298, Cys1292/Cys1307, Cys1314/Cys1327, Cys1321/Cys1340, and Cys1334/Cys1350. The Ca(2+) site is built by Tyr1207, Asp1210, Val1212, Asp1214, Asp1220, and Glu1221. An N-linked (GlcNAc...) asparagine glycan is attached at Asn1329. Asn1385, Asn1452, Asn1498, and Asn1552 each carry an N-linked (GlcNAc...) asparagine glycan. 10 LDL-receptor class B repeats span residues 1480 to 1522 (GRIF…DWVG), 1523 to 1565 (RNLY…DPRV), 1568 to 1611 (RVIF…DYPT), 1612 to 1654 (RLLY…TIFE), 1655 to 1696 (DSIY…VHPA), 1789 to 1831 (QFLY…DWLS), 1832 to 1881 (RNLY…DPAK), 1882 to 1929 (GKLY…DIQE), 1930 to 1971 (QKLY…YGPY), and 1972 to 2012 (LYYA…YRRR). N-linked (GlcNAc...) asparagine glycosylation is found at Asn1677 and Asn1809. Residue Asn2053 is glycosylated (N-linked (GlcNAc...) asparagine). 9 LDL-receptor class B repeats span residues 2105–2154 (GFVY…DWVA), 2155–2199 (GNLY…DPKN), 2200–2243 (RYLF…DHNS), 2244–2287 (GYIY…FGNS), 2429–2475 (NRIY…DWIG), 2476–2516 (RRIY…DPCQ), 2517–2560 (GYMY…DYKE), 2561–2602 (NLLY…YGQY), and 2603–2644 (IYWT…VVNN). Residues Asn2175 and Asn2222 are each glycosylated (N-linked (GlcNAc...) asparagine). An N-linked (GlcNAc...) asparagine glycan is attached at Asn2485. LDL-receptor class A domains lie at 2696–2734 (RCNS…TLCA), 2737–2773 (TCPP…SGCR), 2776–2815 (SCNI…KNCA), 2818–2857 (TCLP…IYCV), 2860–2897 (TCKN…ATCV), 2902–2941 (TCSS…HHCE), 2944–2986 (NCSS…QNCT), 2989–3025 (NCSG…RNCK), 3028–3066 (ACDE…HLCH), and 3071–3107 (TCPP…ERCG). 18 cysteine pairs are disulfide-bonded: Cys2697-Cys2709, Cys2704-Cys2722, Cys2716-Cys2733, Cys2738-Cys2750, Cys2745-Cys2763, Cys2757-Cys2772, Cys2777-Cys2790, Cys2785-Cys2803, Cys2797-Cys2814, Cys2819-Cys2832, Cys2826-Cys2845, Cys2839-Cys2856, Cys2861-Cys2873, Cys2868-Cys2886, Cys2880-Cys2896, Cys2903-Cys2915, Cys2910-Cys2928, and Cys2922-Cys2940. The N-linked (GlcNAc...) asparagine glycan is linked to Asn2698. N-linked (GlcNAc...) asparagine glycosylation occurs at Asn2778. 2 N-linked (GlcNAc...) asparagine glycosylation sites follow: Asn2806 and Asn2807. A glycan (N-linked (GlcNAc...) asparagine) is linked at Asn2944. 3 cysteine pairs are disulfide-bonded: Cys2945-Cys2962, Cys2952-Cys2975, and Cys2969-Cys2985. Asn2984 and Asn2989 each carry an N-linked (GlcNAc...) asparagine glycan. 9 cysteine pairs are disulfide-bonded: Cys2990–Cys3002, Cys2997–Cys3015, Cys3009–Cys3024, Cys3029–Cys3041, Cys3036–Cys3054, Cys3048–Cys3065, Cys3072–Cys3084, Cys3079–Cys3097, and Cys3091–Cys3106. Residue Asn3122 is glycosylated (N-linked (GlcNAc...) asparagine). Positions 3149–3189 (DIDECKETPSVCSQKCENLLGSYICKCAPGYTREPDGRSCR) constitute an EGF-like 2; calcium-binding domain. Cystine bridges form between Cys3153–Cys3164, Cys3160–Cys3173, and Cys3175–Cys3188. Asn3208, Asn3254, Asn3312, and Asn3352 each carry an N-linked (GlcNAc...) asparagine glycan. 5 LDL-receptor class B repeats span residues 3236–3278 (ERLY…DWVT), 3279–3321 (RKLY…DKPR), 3330–3373 (GYVY…DYTN), 3374–3417 (DLLY…FEDT), and 3418–3458 (IYWT…YHPY). N-linked (GlcNAc...) asparagine glycans are attached at residues Asn3435 and Asn3444. LDL-receptor class A domains are found at residues 3509-3547 (MCSS…NTCP), 3550-3588 (FCRL…VLCE), 3591-3629 (RCES…SHCA), 3632-3670 (TCLP…QECM), 3675-3713 (RCDN…QNCE), 3716-3753 (TCKP…ENCV), 3756-3792 (QCSE…RDCE), 3795-3831 (TCHP…ATCP), and 3839-3877 (YCPA…HLCL). Intrachain disulfides connect Cys3510–Cys3523, Cys3517–Cys3536, Cys3530–Cys3546, Cys3551–Cys3563, Cys3558–Cys3576, Cys3570–Cys3587, Cys3592–Cys3604, Cys3599–Cys3617, Cys3611–Cys3628, Cys3633–Cys3645, Cys3640–Cys3658, Cys3652–Cys3669, Cys3676–Cys3690, Cys3684–Cys3703, Cys3697–Cys3712, Cys3717–Cys3730, Cys3725–Cys3743, Cys3737–Cys3752, Cys3757–Cys3769, Cys3764–Cys3782, Cys3776–Cys3791, Cys3796–Cys3808, Cys3803–Cys3821, Cys3815–Cys3830, Cys3840–Cys3852, Cys3847–Cys3865, and Cys3859–Cys3876. Asn3562 is a glycosylation site (N-linked (GlcNAc...) asparagine). N-linked (GlcNAc...) asparagine glycosylation is present at Asn3678. N-linked (GlcNAc...) asparagine glycosylation is present at Asn3878. 2 LDL-receptor class A domains span residues 3880–3919 (TCDL…ENCL) and 3925–3961 (PCTE…TGCN). 12 disulfides stabilise this stretch: Cys3881–Cys3894, Cys3889–Cys3907, Cys3901–Cys3918, Cys3926–Cys3938, Cys3933–Cys3951, Cys3945–Cys3960, Cys3968–Cys3977, Cys3973–Cys3987, Cys3989–Cys4003, Cys4009–Cys4019, Cys4015–Cys4028, and Cys4030–Cys4045. In terms of domain architecture, EGF-like 3 spans 3964-4004 (EERSCAENLCEHNCTQLIGGGFICSCRPGFKASSLNRNSCE). The N-linked (GlcNAc...) asparagine glycan is linked to Asn3976. Positions 4005 to 4046 (DINECEQFGVCPQNCHNTKGSYECTCAEGFRSMSEHYGERCA) constitute an EGF-like 4; calcium-binding domain. An N-linked (GlcNAc...) asparagine glycan is attached at Asn4066. 3 LDL-receptor class B repeats span residues 4152-4194 (RHIY…NPKQ), 4195-4238 (GLMY…DYVN), and 4240-4281 (DRIY…FESQ). Asn4325 carries N-linked (GlcNAc...) asparagine glycosylation. The EGF-like 5 domain occupies 4375 to 4409 (MPPPCRCMNEGNCYFDKNNLPKCKCPSGYMGEYCE). Cystine bridges form between Cys4379/Cys4387, Cys4381/Cys4397, and Cys4399/Cys4408. A helical membrane pass occupies residues 4423–4443 (AVLVTLILIIIIGGLVALGFF). The Cytoplasmic portion of the chain corresponds to 4444–4652 (HYRKTGSILI…ANLVREDSEA (209 aa)). The SH3-binding signature appears at 4450-4459 (SILISMPRLP). Positions 4453-4458 (ISMPRL) match the PxLPxI/L motif 1; mediates interaction with ANKRA2 motif. The short motif at 4456–4461 (PRLPSL) is the PxLPxI/L motif 2; mediates interaction with ANKRA2 element. Ser4460 carries the phosphoserine modification. Residues 4518–4523 (FENPMY) carry the Endocytosis signal motif. The span at 4536-4553 (TTTQVSESGNVYNKNYGS) shows a compositional bias: polar residues. A disordered region spans residues 4536–4652 (TTTQVSESGN…ANLVREDSEA (117 aa)). Ser4568 is subject to Phosphoserine. The segment at 4588–4601 (QNTNFENPIYAETE) is interaction with DAB2. The NPXY motif motif lies at 4594-4597 (NPIY). Residues 4597 to 4600 (YAET) carry the SH2-binding motif. The short motif at 4610-4621 (VTPPPSPSPPAK) is the SH3-binding element. Ser4615 carries the post-translational modification Phosphoserine. Positions 4626–4636 (KGTTPAYSATE) are enriched in polar residues. Thr4629 bears the Phosphothreonine mark. Ser4650 carries the post-translational modification Phosphoserine.

This sequence belongs to the LDLR family. As to quaternary structure, binds plasminogen, extracellular matrix components, plasminogen activator-plasminogen activator inhibitor type I complex, apolipoprotein E-enriched beta-VLDL, lipoprotein lipase, lactoferrin, CLU/clusterin and calcium. Forms a multimeric complex together with LRPAP1. Interacts (via PxLPxI/L motif) with ANKRA2 (via ankyrin repeats). Interacts with LRP2BP. Interacts (via NPXY motif) with DAB2; the interaction is not affected by tyrosine phosphorylation of the NPXY motif. Interacts with MB. Interacts with BMP4. Interacts with the Sonic hedgehog protein N-product which is the active product of SHH. Interacts with CST3 in a calcium-dependent manner. Interacts with the vitamin-D binding protein GC/DBP. Interacts with sex hormone-binding protein SHBG. Interacts with angiotensin-2. Also interacts with angiotensin 1-7. Interacts with APOM. Interacts with selenoprotein SEPP1. Interacts with LEP. Interacts with ALB. Interacts with the antiapoptotic protein BIRC5/survivin. Interacts with matrix metalloproteinase MMP2 in complex with metalloproteinase inhibitor TIMP1. In neurons, forms a trimeric complex with APP and APPB1/FE65. Interacts with LDLRAP1/ARH; mediates trafficking of LRP2 to the endocytic recycling compartment. Does not interact with beta-amyloid protein 40 alone but interacts with the complex composed of beta-amyloid protein 40 and CLU/APOJ. Interacts with MDK. In terms of processing, a fraction undergoes proteolytic cleavage of the extracellular domain at the cell membrane to generate a cytoplasmic tail fragment. This is internalized into the early endosome from where it trafficks in an LDLRAP1/ARH-dependent manner to the endocytic recycling compartment (ERC). In the ERC, it is further cleaved by gamma-secretase to release a fragment which translocates to the nucleus and mediates transcriptional repression. Post-translationally, N-glycosylation is required for ligand binding.

The protein localises to the apical cell membrane. Its subcellular location is the endosome lumen. It is found in the membrane. The protein resides in the clathrin-coated pit. It localises to the cell projection. The protein localises to the dendrite. Its subcellular location is the axon. In terms of biological role, multiligand endocytic receptor. Acts together with CUBN to mediate endocytosis of high-density lipoproteins. Mediates receptor-mediated uptake of polybasic drugs such as aprotinin, aminoglycosides and polymyxin B. In the kidney, mediates the tubular uptake and clearance of leptin. Also mediates transport of leptin across the blood-brain barrier through endocytosis at the choroid plexus epithelium. Endocytosis of leptin in neuronal cells is required for hypothalamic leptin signaling and leptin-mediated regulation of feeding and body weight. Mediates endocytosis and subsequent lysosomal degradation of CST3 in kidney proximal tubule cells. Mediates renal uptake of 25-hydroxyvitamin D3 in complex with the vitamin D3 transporter GC/DBP. Mediates renal uptake of metallothionein-bound heavy metals. Together with CUBN, mediates renal reabsorption of myoglobin. Mediates renal uptake and subsequent lysosomal degradation of APOM. Plays a role in kidney selenium homeostasis by mediating renal endocytosis of selenoprotein SEPP1. Mediates renal uptake of the antiapoptotic protein BIRC5/survivin which may be important for functional integrity of the kidney. Mediates renal uptake of matrix metalloproteinase MMP2 in complex with metalloproteinase inhibitor TIMP1. Mediates endocytosis of Sonic hedgehog protein N-product (ShhN), the active product of SHH. Also mediates ShhN transcytosis. In the embryonic neuroepithelium, mediates endocytic uptake and degradation of BMP4, is required for correct SHH localization in the ventral neural tube and plays a role in patterning of the ventral telencephalon. Required at the onset of neurulation to sequester SHH on the apical surface of neuroepithelial cells of the rostral diencephalon ventral midline and to control PTCH1-dependent uptake and intracellular trafficking of SHH. During neurulation, required in neuroepithelial cells for uptake of folate bound to the folate receptor FOLR1 which is necessary for neural tube closure. In the adult brain, negatively regulates BMP signaling in the subependymal zone which enables neurogenesis to proceed. In astrocytes, mediates endocytosis of ALB which is required for the synthesis of the neurotrophic factor oleic acid. Involved in neurite branching. During optic nerve development, required for SHH-mediated migration and proliferation of oligodendrocyte precursor cells. Mediates endocytic uptake and clearance of SHH in the retinal margin which protects retinal progenitor cells from mitogenic stimuli and keeps them quiescent. Plays a role in reproductive organ development by mediating uptake in reproductive tissues of androgen and estrogen bound to the sex hormone binding protein SHBG. Mediates endocytosis of angiotensin-2. Also mediates endocytosis of angiotensis 1-7. Binds to the complex composed of beta-amyloid protein 40 and CLU/APOJ and mediates its endocytosis and lysosomal degradation. Required for embryonic heart development. Required for normal hearing, possibly through interaction with estrogen in the inner ear. In Sus scrofa (Pig), this protein is Low-density lipoprotein receptor-related protein 2.